The chain runs to 437 residues: 5-hydroxytryptamine receptor 3B (437 aa).

A signal peptide spans 1–21 (MILLWSCLLVAVVGILGTATP). The Extracellular segment spans residues 22 to 235 (QPGNSSLHRL…RFNVVIRRCP (214 aa)). Asn25, Asn92, and Asn134 each carry an N-linked (GlcNAc...) asparagine glycan. Residues Cys151 and Cys165 are joined by a disulfide bond. Residues 236-255 (LAYVVSLLIPSIFLMLVDLG) traverse the membrane as a helical segment. Topologically, residues 256 to 266 (SFYLPPNCRAR) are cytoplasmic. The helical transmembrane segment at 267-284 (IVFKTNVLVGYTVFRVNM) threads the bilayer. Over 285-295 (SDEVPRSAGCT) the chain is Extracellular. A helical transmembrane segment spans residues 296–324 (SLIGVFFTVCMALLVLSLSKSILLIKFLY). Residues 325 to 410 (EERHSEQERP…WLAILCHFDQ (86 aa)) are Cytoplasmic-facing. The segment at 377–409 (FWFQLQSINNSLRTRDQVYQKEVEWLAILCHFD) is HA-stretch; determines single-channel conductance in 5-HT3 receptors. Residues 411 to 434 (LLFRIYLAVLGLYTVTLCSLWALW) form a helical membrane-spanning segment. Over 435-437 (SRM) the chain is Extracellular.

It belongs to the ligand-gated ion channel (TC 1.A.9) family. 5-hydroxytryptamine receptor (TC 1.A.9.2) subfamily. HTR3B sub-subfamily. In terms of assembly, forms homopentameric as well as heteropentameric serotonin-activated cation-selective channel complexes with HTR3A. The homomeric complex is not functional. Heteropentameric complexes display properties which resemble that of neuronal serotonin-activated channels in vivo. Post-translationally, N-glycosylation is required for membrane localization. In terms of tissue distribution, expressed in peripheral neurons, but not in neurons of the central nervous system.

It is found in the postsynaptic cell membrane. The protein resides in the cell membrane. The enzyme catalyses Na(+)(in) = Na(+)(out). The catalysed reaction is K(+)(in) = K(+)(out). It catalyses the reaction Ca(2+)(in) = Ca(2+)(out). In terms of biological role, forms serotonin (5-hydroxytryptamine/5-HT3)-activated cation-selective channel complexes, which when activated cause fast, depolarizing responses in neurons. This is 5-hydroxytryptamine receptor 3B from Rattus norvegicus (Rat).